A 222-amino-acid chain; its full sequence is Small ribosomal subunit protein uS2 (222 aa).

It belongs to the universal ribosomal protein uS2 family.

The chain is Small ribosomal subunit protein uS2 from Karelsulcia muelleri (strain GWSS) (Sulcia muelleri).